The following is a 517-amino-acid chain: Cytochrome P450 monooxygenase penP (517 aa).

A helical membrane pass occupies residues 17 to 37 (GEATVIWILVALVLVAYLILP). Position 456 (cysteine 456) interacts with heme. N-linked (GlcNAc...) asparagine glycosylation occurs at asparagine 501.

It belongs to the cytochrome P450 family. Heme is required as a cofactor.

Its subcellular location is the membrane. It participates in secondary metabolite biosynthesis. Functionally, cytochrome P450 monooxygenase; part of the gene cluster that mediates the biosynthesis of the indole diterpenes penitrems. The geranylgeranyl diphosphate (GGPP) synthase penG catalyzes the first step in penitrem biosynthesis via conversion of farnesyl pyrophosphate and isopentyl pyrophosphate into geranylgeranyl pyrophosphate (GGPP). Condensation of indole-3-glycerol phosphate with GGPP by the prenyl transferase penC then forms 3-geranylgeranylindole (3-GGI). Epoxidation by the FAD-dependent monooxygenase penM leads to a epoxidized-GGI that is substrate of the terpene cyclase penB for cyclization to yield paspaline. Paspaline is subsequently converted to 13-desoxypaxilline by the cytochrome P450 monooxygenase penP, the latter being then converted to paxilline by the cytochrome P450 monooxygenase penQ. Paxilline is converted to beta-paxitriol via C-10 ketoreduction by the short-chain dehydrogenase PC-15 which can be monoprenylated at the C-20 by the indole diterpene prenyltransferase penD. A two-step elimination (acetylation and elimination) process performed by the O-acetyltransferase PC-16 and the P.simplicissimum ptmI-ortholog not yet identified in P.crustosum, leads to the production of the prenylated form of penijanthine. The FAD-linked oxidoreductase ptmO then converts the prenylated form of penijanthine into PC-M5 which is in turn transformed into PC-M4 by the aromatic dimethylallyltransferase PC-22. A series of oxidation steps involving 4 cytochrome P450 monooxygenases (PC-21, PC-05, PC-23, PC-20) and a FAD-dependent monooxygenase (PC-14) are required for the transformation of PC-M4 to penitrems A and E. Synthesis of these final products is proposed to proceed via penitrems D and C (PC-21, PC-05, PC-14) and penitrems B and F (PC-21, PC-05, PC-14, PC-23). This Penicillium crustosum (Blue mold fungus) protein is Cytochrome P450 monooxygenase penP.